The chain runs to 136 residues: Histone H3, embryonic (136 aa).

A disordered region spans residues 1–43; the sequence is MARTKQTARKSTGGKAPRKQLATKAARKSAPATGGVKKPHRYR. Lysine 5 bears the N6-methylated lysine mark. The residue at position 10 (lysine 10) is an N6-acetyllysine; alternate. An N6-methylated lysine; alternate modification is found at lysine 10. Serine 11 carries the post-translational modification Phosphoserine. Residues lysine 15 and lysine 24 each carry the N6-acetyllysine modification. N6-methylated lysine occurs at positions 28, 37, and 80.

The protein belongs to the histone H3 family. The nucleosome is a histone octamer containing two molecules each of H2A, H2B, H3 and H4 assembled in one H3-H4 heterotetramer and two H2A-H2B heterodimers. The octamer wraps approximately 147 bp of DNA. Post-translationally, acetylation is generally linked to gene activation. Methylation at Lys-5 is linked to gene activation. Methylation at Lys-10 is linked to gene repression.

It is found in the nucleus. Its subcellular location is the chromosome. Its function is as follows. Core component of nucleosome. Nucleosomes wrap and compact DNA into chromatin, limiting DNA accessibility to the cellular machineries which require DNA as a template. Histones thereby play a central role in transcription regulation, DNA repair, DNA replication and chromosomal stability. DNA accessibility is regulated via a complex set of post-translational modifications of histones, also called histone code, and nucleosome remodeling. The polypeptide is Histone H3, embryonic (Strongylocentrotus purpuratus (Purple sea urchin)).